We begin with the raw amino-acid sequence, 270 residues long: Aquaporin-11 (270 aa).

2 helical membrane passes run 5–25 (IMTM…ISIC) and 59–79 (FELG…GLFF). The NPA 1 motif lies at 94–96 (DPS). Residues 120-140 (IMGAAVSYRFAKIFWSFGLMA) traverse the membrane as a helical segment. An N-linked (GlcNAc...) asparagine glycan is attached at Asn-148. 2 helical membrane passes run 153–173 (ASLQ…TIVN) and 184–204 (MLIS…VSGG). The short motif at 207-209 (NPT) is the NPA 2 element. A helical transmembrane segment spans residues 220–240 (GLSGPSFFLVYWFGPILGSSI).

This sequence belongs to the MIP/aquaporin (TC 1.A.8) family.

The protein resides in the membrane. The enzyme catalyses H2O(in) = H2O(out). Probable intracellular unorthodox aquaporin that may modulate the water content and osmolytes during anhydrobiosis. The protein is Aquaporin-11 of Milnesium tardigradum (Water bear).